A 70-amino-acid polypeptide reads, in one-letter code: DNA-directed RNA polymerase subunit omega (70 aa).

The protein belongs to the RNA polymerase subunit omega family. As to quaternary structure, the RNAP catalytic core consists of 2 alpha, 1 beta, 1 beta' and 1 omega subunit. When a sigma factor is associated with the core the holoenzyme is formed, which can initiate transcription.

It carries out the reaction RNA(n) + a ribonucleoside 5'-triphosphate = RNA(n+1) + diphosphate. In terms of biological role, promotes RNA polymerase assembly. Latches the N- and C-terminal regions of the beta' subunit thereby facilitating its interaction with the beta and alpha subunits. This is DNA-directed RNA polymerase subunit omega from Staphylococcus saprophyticus subsp. saprophyticus (strain ATCC 15305 / DSM 20229 / NCIMB 8711 / NCTC 7292 / S-41).